The chain runs to 552 residues: Cycloheximide resistance protein (552 aa).

The tract at residues 46-70 (VLNSSDKSQSSENKEQTEGDQATIQ) is disordered. Residues 47-56 (LNSSDKSQSS) are compositionally biased toward polar residues. The next 12 membrane-spanning stretches (helical) occupy residues 100 to 120 (AIAAMQIGFLTVSVYMASAIY), 137 to 157 (LATLPLTMFVIGYGIGPLFWS), 168 to 188 (TPLYIITLFIFFILQIPTALS), 194 to 213 (LSVLRVIAGFFAAPALSTGG), 225 to 246 (YSIALGVWSIFAVAGPSIGPLI), 262 to 282 (WSFWFMAILSGVCFIVLSFSL), 346 to 362 (IYIALVYSIMYLIFESV), 381 to 399 (YVSTIIGIIIGGAIYLPTV), 419 to 439 (LPPAIFGAICMPIGVFIFGWT), 445 to 464 (NWFVPLIGMALFAVGAFIIF), 477 to 494 (VEYLASVFSSNAFFRSVS), and 518 to 539 (WGSSILGFISLGMIAIPVFFYL).

It belongs to the major facilitator superfamily. CAR1 family.

The protein localises to the membrane. In terms of biological role, probable transporter. Confers resistance to cycloheximide. This Candida maltosa (Yeast) protein is Cycloheximide resistance protein (CYHR).